A 1024-amino-acid chain; its full sequence is Beta-galactosidase 2 (1024 aa).

Positions 103 and 202 each coordinate substrate. Na(+) is bound at residue aspartate 202. The Mg(2+) site is built by glutamate 417, histidine 419, and glutamate 462. Residues glutamate 462 and 538 to 541 (EYAH) contribute to the substrate site. Catalysis depends on glutamate 462, which acts as the Proton donor. Catalysis depends on glutamate 538, which acts as the Nucleophile. Asparagine 598 provides a ligand contact to Mg(2+). Phenylalanine 602 and asparagine 605 together coordinate Na(+). Residues asparagine 605 and tryptophan 1000 each contribute to the substrate site.

The protein belongs to the glycosyl hydrolase 2 family. In terms of assembly, homotetramer. Requires Mg(2+) as cofactor. Na(+) is required as a cofactor.

The catalysed reaction is Hydrolysis of terminal non-reducing beta-D-galactose residues in beta-D-galactosides.. The polypeptide is Beta-galactosidase 2 (Klebsiella pneumoniae subsp. pneumoniae (strain ATCC 700721 / MGH 78578)).